Consider the following 160-residue polypeptide: Anaerobic nitrite reductase AHB1 (160 aa).

The region spanning 8-157 (VFTEEQEALV…LVAAIKAEMN (150 aa)) is the Globin domain. Residues 41-45 (EIAPT) carry the Homodimerization motif. Heme b-binding residues include Ser51, Lys65, His69, Arg99, Ser103, and His104. The Homodimerization motif lies at 111–123 (DEHFEVAKYALLE).

Belongs to the plant globin family. As to quaternary structure, homodimer. The cofactor is heme b. Expressed in roots and rosette leaves.

The protein resides in the cytoplasm. Its subcellular location is the nucleus. It catalyses the reaction Fe(III)-heme b-[protein] + nitric oxide + H2O = Fe(II)-heme b-[protein] + nitrite + 2 H(+). Its function is as follows. Phytoglobin that reduces nitrite to nitric oxide (NO) under anoxic conditions (e.g. during flooding or in waterlogged soil). May not function as an oxygen storage or transport protein. Has an unusually high affinity for O(2) through an hexacoordinate heme iron because of a very low dissociation constant. The sequence is that of Anaerobic nitrite reductase AHB1 from Arabidopsis thaliana (Mouse-ear cress).